Consider the following 140-residue polypeptide: Large ribosomal subunit protein uL11 (140 aa).

It belongs to the universal ribosomal protein uL11 family. Part of the ribosomal stalk of the 50S ribosomal subunit. Interacts with L10 and the large rRNA to form the base of the stalk. L10 forms an elongated spine to which L12 dimers bind in a sequential fashion forming a multimeric L10(L12)X complex. Post-translationally, one or more lysine residues are methylated.

Its function is as follows. Forms part of the ribosomal stalk which helps the ribosome interact with GTP-bound translation factors. This chain is Large ribosomal subunit protein uL11, found in Staphylococcus epidermidis (strain ATCC 35984 / DSM 28319 / BCRC 17069 / CCUG 31568 / BM 3577 / RP62A).